The sequence spans 82 residues: Progonadoliberin-3 (82 aa).

The N-terminal stretch at Met1 to Ser23 is a signal peptide. Gln24 is subject to Pyrrolidone carboxylic acid. A Glycine amide modification is found at Gly33.

Belongs to the GnRH family.

The protein localises to the secreted. In terms of biological role, stimulates the secretion of gonadotropins. The sequence is that of Progonadoliberin-3 (gnrh3) from Salmo trutta (Brown trout).